The chain runs to 306 residues: Ribonuclease Z (306 aa).

His-63, His-65, Asp-67, His-68, His-141, Asp-208, and His-266 together coordinate Zn(2+). Asp-67 serves as the catalytic Proton acceptor.

Belongs to the RNase Z family. As to quaternary structure, homodimer. Zn(2+) serves as cofactor.

The enzyme catalyses Endonucleolytic cleavage of RNA, removing extra 3' nucleotides from tRNA precursor, generating 3' termini of tRNAs. A 3'-hydroxy group is left at the tRNA terminus and a 5'-phosphoryl group is left at the trailer molecule.. Zinc phosphodiesterase, which displays some tRNA 3'-processing endonuclease activity. Probably involved in tRNA maturation, by removing a 3'-trailer from precursor tRNA. This chain is Ribonuclease Z, found in Protochlamydia amoebophila (strain UWE25).